Reading from the N-terminus, the 200-residue chain is Riboflavin synthase (200 aa).

Lumazine-binding repeat units follow at residues Met1–His97 and Leu98–Val190. Residues Gly4 to Ile6, Cys48 to Thr50, Asp62 to Thr67, Gly101 to Val103, Lys132, Ser141 to Thr143, and Gly155 to Thr160 each bind 2,4-dihydroxypteridine.

In terms of assembly, homotrimer.

It catalyses the reaction 2 6,7-dimethyl-8-(1-D-ribityl)lumazine + H(+) = 5-amino-6-(D-ribitylamino)uracil + riboflavin. It participates in cofactor biosynthesis; riboflavin biosynthesis; riboflavin from 2-hydroxy-3-oxobutyl phosphate and 5-amino-6-(D-ribitylamino)uracil: step 2/2. In terms of biological role, catalyzes the dismutation of two molecules of 6,7-dimethyl-8-ribityllumazine, resulting in the formation of riboflavin and 5-amino-6-(D-ribitylamino)uracil. The protein is Riboflavin synthase (ribE) of Chlamydia pneumoniae (Chlamydophila pneumoniae).